We begin with the raw amino-acid sequence, 63 residues long: Light-harvesting protein B-800/850 alpha chain (63 aa).

Topologically, residues Met1–Val14 are cytoplasmic. A helical membrane pass occupies residues Gly15–Val35. His31 provides a ligand contact to a bacteriochlorophyll. Topologically, residues Leu36–Ser63 are periplasmic.

It belongs to the antenna complex alpha subunit family. The core complex is formed by different alpha and beta chains, binding bacteriochlorophyll molecules, and arranged most probably in tetrameric structures disposed around the reaction center. The non-pigmented gamma chains may constitute additional components.

Its subcellular location is the cell inner membrane. Functionally, antenna complexes are light-harvesting systems, which transfer the excitation energy to the reaction centers. The chain is Light-harvesting protein B-800/850 alpha chain (pucA) from Rhodovulum sulfidophilum (Rhodobacter sulfidophilus).